We begin with the raw amino-acid sequence, 267 residues long: Acyl-[acyl-carrier-protein]--UDP-N-acetylglucosamine O-acyltransferase (267 aa).

It belongs to the transferase hexapeptide repeat family. LpxA subfamily. Homotrimer.

Its subcellular location is the cytoplasm. The enzyme catalyses a (3R)-hydroxyacyl-[ACP] + UDP-N-acetyl-alpha-D-glucosamine = a UDP-3-O-[(3R)-3-hydroxyacyl]-N-acetyl-alpha-D-glucosamine + holo-[ACP]. The protein operates within glycolipid biosynthesis; lipid IV(A) biosynthesis; lipid IV(A) from (3R)-3-hydroxytetradecanoyl-[acyl-carrier-protein] and UDP-N-acetyl-alpha-D-glucosamine: step 1/6. Its function is as follows. Involved in the biosynthesis of lipid A, a phosphorylated glycolipid that anchors the lipopolysaccharide to the outer membrane of the cell. In Cupriavidus taiwanensis (strain DSM 17343 / BCRC 17206 / CCUG 44338 / CIP 107171 / LMG 19424 / R1) (Ralstonia taiwanensis (strain LMG 19424)), this protein is Acyl-[acyl-carrier-protein]--UDP-N-acetylglucosamine O-acyltransferase.